Consider the following 124-residue polypeptide: UPF0375 protein Y45F10C.4 (124 aa).

The first 23 residues, 1–23 (MNFLPSTVLLLSFVVAIISGSFS), serve as a signal peptide directing secretion. N-linked (GlcNAc...) asparagine glycans are attached at residues asparagine 36 and asparagine 62.

This sequence belongs to the UPF0375 family.

The protein localises to the secreted. The polypeptide is UPF0375 protein Y45F10C.4 (Caenorhabditis elegans).